The sequence spans 40 residues: Putative NAD(P)-dependent glyceraldehyde-3-phosphate dehydrogenase PS5 (40 aa).

The sequence is that of Putative NAD(P)-dependent glyceraldehyde-3-phosphate dehydrogenase PS5 from Pinus strobus (Eastern white pine).